The primary structure comprises 286 residues: Pantothenate synthetase (286 aa).

Residue 30 to 37 (MGNLHAGH) participates in ATP binding. Histidine 37 functions as the Proton donor in the catalytic mechanism. Position 61 (glutamine 61) interacts with (R)-pantoate. Glutamine 61 is a binding site for beta-alanine. 149–152 (GEKD) provides a ligand contact to ATP. Glutamine 155 contacts (R)-pantoate. ATP is bound by residues valine 178 and 186 to 189 (MSSR).

The protein belongs to the pantothenate synthetase family. Homodimer.

It localises to the cytoplasm. It catalyses the reaction (R)-pantoate + beta-alanine + ATP = (R)-pantothenate + AMP + diphosphate + H(+). Its pathway is cofactor biosynthesis; (R)-pantothenate biosynthesis; (R)-pantothenate from (R)-pantoate and beta-alanine: step 1/1. Its function is as follows. Catalyzes the condensation of pantoate with beta-alanine in an ATP-dependent reaction via a pantoyl-adenylate intermediate. The polypeptide is Pantothenate synthetase (Methylococcus capsulatus (strain ATCC 33009 / NCIMB 11132 / Bath)).